Here is a 73-residue protein sequence, read N- to C-terminus: Large ribosomal subunit protein bL31 (73 aa).

Zn(2+) is bound by residues cysteine 16, cysteine 18, cysteine 36, and cysteine 39.

Belongs to the bacterial ribosomal protein bL31 family. Type A subfamily. In terms of assembly, part of the 50S ribosomal subunit. Zn(2+) is required as a cofactor.

Functionally, binds the 23S rRNA. This is Large ribosomal subunit protein bL31 from Desulfosudis oleivorans (strain DSM 6200 / JCM 39069 / Hxd3) (Desulfococcus oleovorans).